Consider the following 183-residue polypeptide: uncharacterized protein (183 aa).

The chain crosses the membrane as a helical span at residues 153 to 175 (LLYVFIRLFAGCLKVFRLCILWL).

The protein resides in the membrane. This is an uncharacterized protein from Saccharomyces cerevisiae (strain ATCC 204508 / S288c) (Baker's yeast).